The following is a 591-amino-acid chain: Zinc finger protein 48 (591 aa).

N-acetylmethionine is present on Met1. Disordered stretches follow at residues 1–24 (MEAS…IKEE) and 55–80 (GLGK…GSND). 2 stretches are compositionally biased toward basic and acidic residues: residues 8–24 (EFEH…IKEE) and 55–65 (GLGKRQPRDPV). Ser12 carries the phosphoserine modification. Lys58 participates in a covalent cross-link: Glycyl lysine isopeptide (Lys-Gly) (interchain with G-Cter in SUMO2). 2 consecutive C2H2-type zinc fingers follow at residues 83-105 (AVCG…QRTH) and 111-133 (YKCG…QRTH). Positions 131-160 (RTHTGEKAYRVRPPAPGPPKMPRSRIPAGE) are disordered. A Glycyl lysine isopeptide (Lys-Gly) (interchain with G-Cter in SUMO2) cross-link involves residue Lys150. C2H2-type zinc fingers lie at residues 163 to 185 (TICG…QRTH) and 191 to 213 (YKCG…QRTH). Residues 206–241 (RIKHQRTHRGDQLPRPVVPRRQPSPAAPAAPHRPKA) are disordered. The segment covering 224–235 (PRRQPSPAAPAA) has biased composition (low complexity). Lys240 participates in a covalent cross-link: Glycyl lysine isopeptide (Lys-Gly) (interchain with G-Cter in SUMO2). C2H2-type zinc fingers lie at residues 246–268 (YICT…QRSH) and 274–296 (FGCD…LRVH). Residue Lys300 forms a Glycyl lysine isopeptide (Lys-Gly) (interchain with G-Cter in SUMO2) linkage. 2 consecutive C2H2-type zinc fingers follow at residues 302–324 (YLCP…LRTH) and 330–352 (HACP…RLTH). The tract at residues 372–429 (PPPPPLGTSPSLTPRSPSHSSDGPFGLPGLEPEPGGPQAGEPPPPLAGDKPHKCPECG) is disordered. Over residues 379-404 (TSPSLTPRSPSHSSDGPFGLPGLEPE) the composition is skewed to low complexity. The C2H2-type 9 zinc finger occupies 423-445 (HKCPECGKGFRRSSDLVKHHRVH). A Glycyl lysine isopeptide (Lys-Gly) (interchain with G-Cter in SUMO2) cross-link involves residue Lys449. Residues 451-473 (YLCPECGKGFADSSARVKHLRTH) form a C2H2-type 10 zinc finger. The interval 464-512 (SARVKHLRTHQGERTRPPPPPSTLLRPHNPPGSVPIVPQSRVQGRPSGP) is disordered. Residues 480–496 (PPPPPSTLLRPHNPPGS) are compositionally biased toward pro residues. 2 consecutive C2H2-type zinc fingers follow at residues 516–538 (HVCG…RRTH) and 544–566 (YKCA…QRGH). A disordered region spans residues 564 to 591 (RGHLALKPFGVGDGPPRPLKEESPAGLE). A compositionally biased stretch (basic and acidic residues) spans 581–591 (PLKEESPAGLE). Lys583 participates in a covalent cross-link: Glycyl lysine isopeptide (Lys-Gly) (interchain with G-Cter in SUMO2).

This sequence belongs to the krueppel C2H2-type zinc-finger protein family.

The protein resides in the nucleus. Functionally, may be involved in transcriptional regulation. The chain is Zinc finger protein 48 (Znf48) from Mus musculus (Mouse).